A 183-amino-acid chain; its full sequence is UPF0725 protein At4g11700 (183 aa).

Belongs to the UPF0725 (EMB2204) family.

The polypeptide is UPF0725 protein At4g11700 (Arabidopsis thaliana (Mouse-ear cress)).